The chain runs to 479 residues: Anaerobic nitric oxide reductase flavorubredoxin (479 aa).

Residues 30–210 (LRGSSYNSYL…PFSRLVTPKI (181 aa)) are zinc metallo-hydrolase. 6 residues coordinate Fe cation: H79, E81, D83, H147, D166, and H227. One can recognise a Flavodoxin-like domain in the interval 254–393 (ITIFYDTMSN…LCRQHGRDIA (140 aa)). FMN is bound by residues 260 to 264 (TMSNN) and 342 to 369 (AFGS…EMSL). Residues 423–474 (GPKMQCSVCQWIYDPALGEPLQDVAPGTPWSDVPDNFLCPECSLGKDVFDVL) enclose the Rubredoxin-like domain. Positions 428, 431, 461, and 464 each coordinate Fe cation.

The protein in the N-terminal section; belongs to the zinc metallo-hydrolase group 3 family. Homotetramer. It depends on Fe cation as a cofactor. Requires FMN as cofactor.

The protein resides in the cytoplasm. It functions in the pathway nitrogen metabolism; nitric oxide reduction. Anaerobic nitric oxide reductase; uses NADH to detoxify nitric oxide (NO), protecting several 4Fe-4S NO-sensitive enzymes. Has at least 2 reductase partners, only one of which (NorW, flavorubredoxin reductase) has been identified. NO probably binds to the di-iron center; electrons enter from the NorW at rubredoxin and are transferred sequentially to the FMN center and the di-iron center. Also able to function as an aerobic oxygen reductase. The sequence is that of Anaerobic nitric oxide reductase flavorubredoxin from Salmonella typhi.